We begin with the raw amino-acid sequence, 544 residues long: Chaperonin GroEL (544 aa).

ATP is bound by residues 29–32, 86–90, G413, 477–479, and D493; these read TLGP, DGTTT, and DVL.

It belongs to the chaperonin (HSP60) family. In terms of assembly, forms a cylinder of 14 subunits composed of two heptameric rings stacked back-to-back. Interacts with the co-chaperonin GroES.

The protein resides in the cytoplasm. The catalysed reaction is ATP + H2O + a folded polypeptide = ADP + phosphate + an unfolded polypeptide.. Functionally, together with its co-chaperonin GroES, plays an essential role in assisting protein folding. The GroEL-GroES system forms a nano-cage that allows encapsulation of the non-native substrate proteins and provides a physical environment optimized to promote and accelerate protein folding. The protein is Chaperonin GroEL of Clostridium kluyveri (strain NBRC 12016).